The following is a 320-amino-acid chain: L-lactate dehydrogenase (320 aa).

NAD(+) contacts are provided by residues Val-19, Asp-40, Arg-45, and 85 to 86 (GA). Residues Gln-88 and Arg-94 each coordinate substrate. NAD(+) is bound by residues Ser-107, 124 to 126 (ITN), and Ser-149. 126 to 129 (NPVD) is a substrate binding site. 154–157 (DSAR) lines the substrate pocket. 2 residues coordinate beta-D-fructose 1,6-bisphosphate: Arg-159 and His-174. Catalysis depends on His-181, which acts as the Proton acceptor. Tyr-228 bears the Phosphotyrosine mark. Thr-237 is a substrate binding site.

This sequence belongs to the LDH/MDH superfamily. LDH family. Homotetramer.

The protein localises to the cytoplasm. The enzyme catalyses (S)-lactate + NAD(+) = pyruvate + NADH + H(+). It participates in fermentation; pyruvate fermentation to lactate; (S)-lactate from pyruvate: step 1/1. With respect to regulation, allosterically activated by fructose 1,6-bisphosphate (FBP). Catalyzes the conversion of lactate to pyruvate. This Bifidobacterium animalis subsp. lactis (strain AD011) protein is L-lactate dehydrogenase.